A 138-amino-acid chain; its full sequence is Ribosome maturation factor RimP (138 aa).

The protein belongs to the RimP family.

The protein resides in the cytoplasm. In terms of biological role, required for maturation of 30S ribosomal subunits. This chain is Ribosome maturation factor RimP, found in Campylobacter curvus (strain 525.92).